Consider the following 315-residue polypeptide: Methionyl-tRNA formyltransferase (315 aa).

111–114 (SLLP) lines the (6S)-5,6,7,8-tetrahydrofolate pocket.

This sequence belongs to the Fmt family.

The catalysed reaction is L-methionyl-tRNA(fMet) + (6R)-10-formyltetrahydrofolate = N-formyl-L-methionyl-tRNA(fMet) + (6S)-5,6,7,8-tetrahydrofolate + H(+). Attaches a formyl group to the free amino group of methionyl-tRNA(fMet). The formyl group appears to play a dual role in the initiator identity of N-formylmethionyl-tRNA by promoting its recognition by IF2 and preventing the misappropriation of this tRNA by the elongation apparatus. This is Methionyl-tRNA formyltransferase from Flavobacterium johnsoniae (strain ATCC 17061 / DSM 2064 / JCM 8514 / BCRC 14874 / CCUG 350202 / NBRC 14942 / NCIMB 11054 / UW101) (Cytophaga johnsonae).